A 214-amino-acid chain; its full sequence is Large ribosomal subunit protein uL16-like (214 aa).

Belongs to the universal ribosomal protein uL16 family. As to quaternary structure, component of the 60S large ribosomal subunit (LSU).

It localises to the cytoplasm. Its function is as follows. Testis-specific component of the ribosome, which is required for the transition from prophase to metaphase in male meiosis I. Compensates for the inactivated X-linked RPL10 paralog during spermatogenesis. The ribosome is a large ribonucleoprotein complex responsible for the synthesis of proteins in the cell. The small ribosomal subunit (SSU) binds messenger RNAs (mRNAs) and translates the encoded message by selecting cognate aminoacyl-transfer RNA (tRNA) molecules. The large subunit (LSU) contains the ribosomal catalytic site termed the peptidyl transferase center (PTC), which catalyzes the formation of peptide bonds, thereby polymerizing the amino acids delivered by tRNAs into a polypeptide chain. The nascent polypeptides leave the ribosome through a tunnel in the LSU and interact with protein factors that function in enzymatic processing, targeting, and the membrane insertion of nascent chains at the exit of the ribosomal tunnel. The polypeptide is Large ribosomal subunit protein uL16-like (RPL10L) (Macaca fascicularis (Crab-eating macaque)).